Here is a 278-residue protein sequence, read N- to C-terminus: Small ribosomal subunit protein uS2 (278 aa).

S2 bears the N-acetylserine mark. The disordered stretch occupies residues 258-278 (TNEGKTAADEWATGAQTQSNW).

It belongs to the universal ribosomal protein uS2 family. Component of the small ribosomal subunit. Mature ribosomes consist of a small (40S) and a large (60S) subunit. The 40S subunit contains about 33 different proteins and 1 molecule of RNA (18S). The 60S subunit contains about 49 different proteins and 3 molecules of RNA (28S, 5.8S and 5S). Interacts with rps-21.

It localises to the cytoplasm. Required for the assembly and/or stability of the 40S ribosomal subunit. Required for the processing of the 20S rRNA-precursor to mature 18S rRNA in a late step of the maturation of 40S ribosomal subunits. This is Small ribosomal subunit protein uS2 from Caenorhabditis briggsae.